The chain runs to 196 residues: Imidazole glycerol phosphate synthase subunit HisH (196 aa).

The 195-residue stretch at 2–196 (NVVIVDTECA…LKRFLELTLC (195 aa)) folds into the Glutamine amidotransferase type-1 domain. Residue C77 is the Nucleophile of the active site. Catalysis depends on residues H175 and E177.

In terms of assembly, heterodimer of HisH and HisF.

The protein resides in the cytoplasm. The enzyme catalyses 5-[(5-phospho-1-deoxy-D-ribulos-1-ylimino)methylamino]-1-(5-phospho-beta-D-ribosyl)imidazole-4-carboxamide + L-glutamine = D-erythro-1-(imidazol-4-yl)glycerol 3-phosphate + 5-amino-1-(5-phospho-beta-D-ribosyl)imidazole-4-carboxamide + L-glutamate + H(+). It catalyses the reaction L-glutamine + H2O = L-glutamate + NH4(+). It functions in the pathway amino-acid biosynthesis; L-histidine biosynthesis; L-histidine from 5-phospho-alpha-D-ribose 1-diphosphate: step 5/9. Functionally, IGPS catalyzes the conversion of PRFAR and glutamine to IGP, AICAR and glutamate. The HisH subunit catalyzes the hydrolysis of glutamine to glutamate and ammonia as part of the synthesis of IGP and AICAR. The resulting ammonia molecule is channeled to the active site of HisF. The chain is Imidazole glycerol phosphate synthase subunit HisH from Idiomarina loihiensis (strain ATCC BAA-735 / DSM 15497 / L2-TR).